Consider the following 210-residue polypeptide: Small ribosomal subunit protein uS3 (210 aa).

A KH type-2 domain is found at 39-107 (IREKLMEKLK…EILLDIQEVK (69 aa)).

The protein belongs to the universal ribosomal protein uS3 family. Part of the 30S ribosomal subunit. Forms a tight complex with proteins S10 and S14.

Binds the lower part of the 30S subunit head. Binds mRNA in the 70S ribosome, positioning it for translation. The protein is Small ribosomal subunit protein uS3 of Opitutus terrae (strain DSM 11246 / JCM 15787 / PB90-1).